Reading from the N-terminus, the 220-residue chain is Type II restriction enzyme NspV (220 aa).

The enzyme catalyses Endonucleolytic cleavage of DNA to give specific double-stranded fragments with terminal 5'-phosphates.. In terms of biological role, a P subtype restriction enzyme that recognizes the double-stranded sequence 5'-TTCGAA-3' and cleaves after T-2. The chain is Type II restriction enzyme NspV from Nostoc sp. (strain ATCC 29411 / PCC 7524).